A 394-amino-acid chain; its full sequence is MPAYKYNRVFLIVMDSVGIGEAPDAADFNDEGAHTLGHIAEHMNGLHMPNMAKLGLGLIEDIKGVEKTEHPLAYYGKMQEASNGKDTMTGHWEIMGLYIDKPFKVFPEGFPDELLQELEKRSGRKIIGNKPASGTAILDELGQEHMETGALIVYTSADSVLQIAAHEEVVPLEELYRICETARELTLDPKYMVGRIIARPFVGEPGQFKRTPNRHDYALKPFDRTVMNELKDCGLDVISIGKISDIYDGEGITSSRRTVSNMDGMDKVIDTLGEDFTGLSFANLVDFDALFGHRRDPEGYGRALEEFDARLPEVFEKMREDDLLIITADHGNDPIHHGTDHTREYVPILAYSKKHKKAQMLPLADTFADIGATIADNFQTNKPKYGKSFLSLLQ.

D15, D288, H293, D329, H330, and H341 together coordinate Mn(2+).

It belongs to the phosphopentomutase family. It depends on Mn(2+) as a cofactor.

Its subcellular location is the cytoplasm. It catalyses the reaction 2-deoxy-alpha-D-ribose 1-phosphate = 2-deoxy-D-ribose 5-phosphate. The enzyme catalyses alpha-D-ribose 1-phosphate = D-ribose 5-phosphate. It functions in the pathway carbohydrate degradation; 2-deoxy-D-ribose 1-phosphate degradation; D-glyceraldehyde 3-phosphate and acetaldehyde from 2-deoxy-alpha-D-ribose 1-phosphate: step 1/2. Isomerase that catalyzes the conversion of deoxy-ribose 1-phosphate (dRib-1-P) and ribose 1-phosphate (Rib-1-P) to deoxy-ribose 5-phosphate (dRib-5-P) and ribose 5-phosphate (Rib-5-P), respectively. The protein is Phosphopentomutase (drm) of Bacillus subtilis (strain 168).